The following is a 380-amino-acid chain: Cytochrome b (380 aa).

4 helical membrane passes run 33-53 (FGSL…FLAM), 77-98 (WLIR…FLHV), 113-133 (WNMG…GYVL), and 178-198 (FFAF…VHLL). Residues histidine 83 and histidine 97 each contribute to the heme b site. Histidine 182 and histidine 196 together coordinate heme b. Histidine 201 contacts a ubiquinone. A run of 4 helical transmembrane segments spans residues 226–246 (IKDL…VLFF), 288–308 (LGGV…PLLH), 320–340 (ITQT…WIGG), and 347–367 (FIMI…IFMP).

It belongs to the cytochrome b family. As to quaternary structure, the cytochrome bc1 complex contains 11 subunits: 3 respiratory subunits (MT-CYB, CYC1 and UQCRFS1), 2 core proteins (UQCRC1 and UQCRC2) and 6 low-molecular weight proteins (UQCRH/QCR6, UQCRB/QCR7, UQCRQ/QCR8, UQCR10/QCR9, UQCR11/QCR10 and a cleavage product of UQCRFS1). This cytochrome bc1 complex then forms a dimer. The cofactor is heme b.

It localises to the mitochondrion inner membrane. Its function is as follows. Component of the ubiquinol-cytochrome c reductase complex (complex III or cytochrome b-c1 complex) that is part of the mitochondrial respiratory chain. The b-c1 complex mediates electron transfer from ubiquinol to cytochrome c. Contributes to the generation of a proton gradient across the mitochondrial membrane that is then used for ATP synthesis. The protein is Cytochrome b (MT-CYB) of Synaptomys borealis (Northern bog lemming).